Reading from the N-terminus, the 164-residue chain is 2S albumin seed storage protein PINP1 (164 aa).

Residues 1 to 29 (MGVFSSPMSTLRWVTLFAALLSLLEWGTA) form the signal peptide. Residues 92-107 (DQSQSYDSSTDSDSQD) are compositionally biased toward low complexity. Residues 92–137 (DQSQSYDSSTDSDSQDGAPLNQRRRRRGEGRGREEEEAVERAEELP) form a disordered region. Basic and acidic residues predominate over residues 120-137 (EGRGREEEEAVERAEELP). An N-linked (GalNAc...) asparagine glycan is attached at Asn138.

It belongs to the 2S seed storage albumins family.

The chain is 2S albumin seed storage protein PINP1 from Pinus pinea (Italian stone pine).